The primary structure comprises 84 residues: Small ribosomal subunit protein bS16 (84 aa).

It belongs to the bacterial ribosomal protein bS16 family.

This Dichelobacter nodosus (strain VCS1703A) protein is Small ribosomal subunit protein bS16.